Consider the following 469-residue polypeptide: Protopanaxadiol 6-hydroxylase (469 aa).

Residues Leu-3–Phe-23 traverse the membrane as a helical segment. Cys-416 serves as a coordination point for heme.

This sequence belongs to the cytochrome P450 family. It depends on heme as a cofactor. Accumulates ubiquitously in all organs of plants, including roots, stems and leaves.

It is found in the membrane. It carries out the reaction (20S)-protopanaxadiol + reduced [NADPH--hemoprotein reductase] + O2 = (20S)-protopanaxatriol + oxidized [NADPH--hemoprotein reductase] + H2O + H(+). It participates in secondary metabolite biosynthesis; terpenoid biosynthesis. With respect to regulation, activated by N,N'-dicyclohexylcarbodiimide (DCCD) thus leading to increased ginsenosides accumulation. Component of the dammarane-type triterpene saponins (e.g. PPT-type ginsenosides or panaxosides) biosynthetic pathway. Catalyzes the formation of protopanaxatriol from protopanaxadiol during ginsenoside biosynthesis, a class of tetracyclic triterpenoid saponins. This is Protopanaxadiol 6-hydroxylase from Panax ginseng (Korean ginseng).